A 178-amino-acid chain; its full sequence is uncharacterized protein (178 aa).

One can recognise an N-acetyltransferase domain in the interval 9–173 (LTLRKMELED…IDVYMFSLLK (165 aa)).

This is an uncharacterized protein from Bacillus licheniformis.